The primary structure comprises 392 residues: Cytochrome b (392 aa).

4 helical membrane-spanning segments follow: residues 38–58 (FGSL…FLAM), 82–104 (WLLR…LHIF), 119–139 (VRCL…TGYV), and 185–205 (FFSL…LHLA). Positions 88 and 102 each coordinate heme b. Positions 189 and 203 each coordinate heme b. His-208 lines the a ubiquinone pocket. Helical transmembrane passes span 231–251 (FYVK…IWIF), 295–315 (SGGV…PFFK), 327–347 (IHQG…WIGC), and 354–373 (FVTI…AITP).

It belongs to the cytochrome b family. As to quaternary structure, the main subunits of complex b-c1 are: cytochrome b, cytochrome c1 and the Rieske protein. It depends on heme b as a cofactor.

The protein localises to the mitochondrion inner membrane. Functionally, component of the ubiquinol-cytochrome c reductase complex (complex III or cytochrome b-c1 complex) that is part of the mitochondrial respiratory chain. The b-c1 complex mediates electron transfer from ubiquinol to cytochrome c. Contributes to the generation of a proton gradient across the mitochondrial membrane that is then used for ATP synthesis. This is Cytochrome b (MT-CYB) from Vicia faba (Broad bean).